The following is a 565-amino-acid chain: CTP synthase (565 aa).

The segment at Met-1–Pro-268 is amidoligase domain. Ser-14 is a binding site for CTP. Position 14 (Ser-14) interacts with UTP. Ser-15–Ile-20 lines the ATP pocket. L-glutamine is bound at residue Tyr-55. Asp-72 is an ATP binding site. Mg(2+)-binding residues include Asp-72 and Glu-142. CTP contacts are provided by residues Asp-149 to Glu-151, Lys-189 to Gln-194, and Lys-225. UTP-binding positions include Lys-189 to Gln-194 and Lys-225. The Glutamine amidotransferase type-1 domain maps to Pro-301 to Glu-543. Gly-363 provides a ligand contact to L-glutamine. Cys-390 (nucleophile; for glutamine hydrolysis) is an active-site residue. L-glutamine is bound by residues Leu-391 to Gln-394, Glu-414, and Arg-471. Active-site residues include His-516 and Glu-518. The interval Asp-545–Met-565 is disordered.

It belongs to the CTP synthase family. In terms of assembly, homotetramer.

The enzyme catalyses UTP + L-glutamine + ATP + H2O = CTP + L-glutamate + ADP + phosphate + 2 H(+). It catalyses the reaction L-glutamine + H2O = L-glutamate + NH4(+). The catalysed reaction is UTP + NH4(+) + ATP = CTP + ADP + phosphate + 2 H(+). It participates in pyrimidine metabolism; CTP biosynthesis via de novo pathway; CTP from UDP: step 2/2. Allosterically activated by GTP, when glutamine is the substrate; GTP has no effect on the reaction when ammonia is the substrate. The allosteric effector GTP functions by stabilizing the protein conformation that binds the tetrahedral intermediate(s) formed during glutamine hydrolysis. Inhibited by the product CTP, via allosteric rather than competitive inhibition. Catalyzes the ATP-dependent amination of UTP to CTP with either L-glutamine or ammonia as the source of nitrogen. Regulates intracellular CTP levels through interactions with the four ribonucleotide triphosphates. This chain is CTP synthase, found in Salinibacter ruber (strain DSM 13855 / M31).